A 198-amino-acid chain; its full sequence is MAQGKVAIIIYSLYHHVYDLALAEKAGIEAAGGVADIYQVAETLSDDVLAKMHAPAKPDIPIATHETLTQYDAFLFGIPTRFGNFPAQIKAFWDRTGGLWAKNALRGKYAGVFVWTGTPGGGQETTIINSLSTLAHHGIIYVPFGYGYPGMTDLEEVHGGSPWGAGTFASGNGSRKVTDLEKAIAKQQGEDFFKTVFK.

The 187-residue stretch at 6-192 (VAIIIYSLYH…AIAKQQGEDF (187 aa)) folds into the Flavodoxin-like domain. FMN is bound by residues 12-16 (SLYHH) and 112-164 (VFVW…SPWG).

Belongs to the WrbA family. FMN is required as a cofactor.

The protein resides in the cell membrane. The enzyme catalyses a quinone + NADH + H(+) = a quinol + NAD(+). It catalyses the reaction a quinone + NADPH + H(+) = a quinol + NADP(+). Its function is as follows. Flavodoxin-like protein (FLP) that plays a role in cell wall integrity, oxidative stress protection and virulence. FLPs act as NAD(P)H quinone oxidoreductases. Reduces ubiquinone (coenzyme Q), enabling it to serve as an antioxidant in the membrane. This Candida albicans (strain SC5314 / ATCC MYA-2876) (Yeast) protein is NAD(P)H quinone oxidoreductase PST1.